A 505-amino-acid chain; its full sequence is Sodium/sialic acid symporter NanT (505 aa).

The next 5 membrane-spanning stretches (helical) occupy residues 9–29 (LNYI…VYFA), 45–65 (IPGW…ITFM), 80–100 (IGQY…IPFF), 128–148 (FMLF…LALM), and 155–175 (PLMI…LGGI). Residue Ala-56 participates in Na(+) binding. Thr-58 contacts N-acetyl-alpha-neuraminate. Leu-59 is a Na(+) binding site. N-acetyl-alpha-neuraminate is bound by residues Ser-60, Thr-63, Gln-82, and Arg-135. Residue Asp-182 coordinates Na(+). The next 4 helical transmembrane spans lie at 183–203 (VIQG…ICFN), 227–247 (FSWS…FFAS), 280–300 (LVAC…AYYT), and 318–338 (FYVI…AIFA). Residues Ala-339, Ser-342, Ser-343, Ser-345, and Ser-346 each contribute to the Na(+) site. A run of 4 helical transmembrane segments spans residues 378-398 (TLTV…IMSN), 406-426 (FNSL…LGIF), 435-455 (ALLG…ATDL), and 457-477 (FFFY…LTAP).

It belongs to the sodium:solute symporter (SSF) (TC 2.A.21) family.

Its subcellular location is the cell inner membrane. The catalysed reaction is N-acetyl-alpha-neuraminate(out) + 2 Na(+)(out) = N-acetyl-alpha-neuraminate(in) + 2 Na(+)(in). Its function is as follows. Symporter that uses the Na(+) gradient as the driving force for the uptake of the sialic acid N-acetylneuraminic acid (Neu5Ac). Might play a role in persistence after colonization. The chain is Sodium/sialic acid symporter NanT from Aliivibrio fischeri (strain ATCC 700601 / ES114) (Vibrio fischeri).